The sequence spans 521 residues: MSL complex subunit 3 (521 aa).

The Tudor-knot domain maps to 13–71; the sequence is SGEKVLCFEPDPTKARVLYDAKIVDVIVGKDEKGRKIPEYLIHFNGWNRSWDRWAAEDH. Disordered stretches follow at residues 114–166 and 298–409; these read KGLP…TRRE and ATST…PSKE. Residues 139 to 149 show a composition bias toward acidic residues; sequence KDEEISEESDI. Residues 150-166 are compositionally biased toward basic and acidic residues; that stretch reads EEKTEVKEEPELQTRRE. The MRG domain occupies 168–517; sequence EERTITIEIP…CEAHYSTKNP (350 aa). A required for the histone acetyltransferase activity of the MSL complex region spans residues 290-440; sequence FFLPIKESAT…WKLVPDNYPP (151 aa). Residues S309 and S311 each carry the phosphoserine modification. Residues 316-329 are compositionally biased toward low complexity; sequence NPSTPQSTESQPTT. Phosphoserine occurs at positions 367 and 400. At T405 the chain carries Phosphothreonine. 2 positions are modified to phosphoserine: S407 and S411.

Component of the MSL histone acetyltransferase complex at least composed of the KAT8/MOF, MSL1/hampin, MSL2 and MSL3. Interacts (via the MRG domain) with MSL1 and KAT8/MOF. In terms of tissue distribution, expressed in many tissues including liver, pancreas, heart, lung, kidney, skeletal muscle, brain, and placenta, with highest expression in skeletal muscle and heart.

The protein resides in the nucleus. Non-catalytic component of the MSL histone acetyltransferase complex, a multiprotein complex that mediates the majority of histone H4 acetylation at 'Lys-16' (H4K16ac), an epigenetic mark that prevents chromatin compaction. The MSL complex is required for chromosome stability and genome integrity by maintaining homeostatic levels of H4K16ac. The MSL complex is also involved in gene dosage by promoting up-regulation of genes expressed by the X chromosome. X up-regulation is required to compensate for autosomal biallelic expression. The MSL complex also participates in gene dosage compensation by promoting expression of Tsix non-coding RNA. Acts as a histone reader that specifically recognizes and binds histone H4 monomethylated at 'Lys-20' (H4K20Me1) in a DNA-dependent manner and is proposed to be involved in chromosomal targeting of the MSL complex. May play a role X inactivation in females. The protein is MSL complex subunit 3 of Homo sapiens (Human).